The following is a 422-amino-acid chain: Mannose-1-phosphate guanylyltransferase regulatory subunit alpha-B (422 aa).

Positions 2-253 (LKAIILIGGP…QHFWSQIKSA (252 aa)) are substrate-binding domain. GDP-alpha-D-mannose-binding residues include Glu85 and Gln249. The hexapeptide repeat domain stretch occupies residues 275–422 (LATNQGGTPK…NRSFKNQIIL (148 aa)). Residues 358–386 (TPSDPNPNDPYAKIDSETLFRDGGLTPSI) form a C-loop region.

This sequence belongs to the transferase hexapeptide repeat family. As to quaternary structure, component of the GMPPA-GMPPB mannose-1-phosphate guanylyltransferase complex composed of 4 GMPPA subunits and 8 GMPPB subunits; the complex is organized into three layers, a central layer made up of 2 GMPPA dimers sandwiched between two layers each made up of 2 GMPPB dimers.

It functions in the pathway nucleotide-sugar biosynthesis; GDP-alpha-D-mannose biosynthesis; GDP-alpha-D-mannose from alpha-D-mannose 1-phosphate (GTP route): step 1/1. Its function is as follows. Regulatory subunit of the GMPPA-GMPPB mannose-1-phosphate guanylyltransferase complex; reduces the catalytic activity of GMPPB when part of the complex. Mediates allosteric feedback inhibition of GMPPB catalytic activity upon binding GDP-alpha-D-mannose. Together with GMPPB regulates GDP-alpha-D-mannose levels. One of two paralogs (gmppaa and gmppab) that may have redundant functions. The polypeptide is Mannose-1-phosphate guanylyltransferase regulatory subunit alpha-B (gmppab) (Danio rerio (Zebrafish)).